Reading from the N-terminus, the 642-residue chain is Threonine--tRNA ligase (642 aa).

One can recognise a TGS domain in the interval 1-61; the sequence is MPIITLPDGS…TADSELAIIT (61 aa). The segment at 243–534 is catalytic; it reads DHRKIGKQLD…LIEEYAGKFP (292 aa). Residues Cys334, His385, and His511 each contribute to the Zn(2+) site.

It belongs to the class-II aminoacyl-tRNA synthetase family. As to quaternary structure, homodimer. Requires Zn(2+) as cofactor.

The protein resides in the cytoplasm. It catalyses the reaction tRNA(Thr) + L-threonine + ATP = L-threonyl-tRNA(Thr) + AMP + diphosphate + H(+). Catalyzes the attachment of threonine to tRNA(Thr) in a two-step reaction: L-threonine is first activated by ATP to form Thr-AMP and then transferred to the acceptor end of tRNA(Thr). Also edits incorrectly charged L-seryl-tRNA(Thr). This chain is Threonine--tRNA ligase, found in Shewanella frigidimarina (strain NCIMB 400).